The following is a 463-amino-acid chain: Hydrolase pyiE (463 aa).

Ser252 acts as the Nucleophile in catalysis. Residues 350-373 (KSDGSRANGKKSHSPTDGGGVESD) are disordered.

It belongs to the AB hydrolase superfamily. FUS2 hydrolase family. In terms of assembly, homodimer.

Its pathway is mycotoxin biosynthesis. Hydrolyase; part of the gene cluster that mediates the biosynthesis of the mycotoxin pyrichalasin H, a tyrosine-derived cytochalasan that inhibits the growth of rice seedlings, but also inhibits lymphocyte capping and actin polymerization and alters cell morphology. Pyrichalasin H is indicated as the responsible agent for the genus-specific pathogenicity of M.grisea toward crabgrass. The first step in the pathway is catalyzed by the O-methyltransferase pyiA which methylates free tyrosine to generate the precursor O-methyltyrosine. The hybrid PKS-NRPS pyiS, assisted by the enoyl reductase pyiC, are responsible for fusion of the O-methyltyrosine precursor and the polyketide backbone. The polyketide synthase module (PKS) of pyiS is responsible for the synthesis of the polyketide backbone and the downstream nonribosomal peptide synthetase (NRPS) amidates the carboxyl end of the polyketide with the O-methyltyrosine precursor. As the NRPS A-domain demonstrates substrate tolerance, pyiS can also use phenylalanine, tyrosine and even para-chlorophenylalanine as amino acid precursor, which leads to the production of novel cytochalasans, including halogenated cytochalasans. Because pyiS lacks a designated enoylreductase (ER) domain, the required activity is provided the enoyl reductase pyiC. Reduction by the hydrolyase pyiE leads to 1,5-dihydropyrrolone, which is substrate for dehydration and intra-molecular Diels-Alder cyclization by the Diels-Alderase pyiF to yield the required isoindolone-fused macrocycle. The tailoring cytochrome P450 monooxygenases piyD and piyG catalyze the hydroxylation at C-18 and C-7, respectivily, whereas the short-chain dehydrogenase/reductase pyiH reduces the carbonyl at C-21 in preparation for the transfer of an acetyl group by the acetyltransferase pyiB. These 3 reactions whose order is not clear yet, lead to the production of O-methylpyrichalasin J, a deacetylated pyrichalasin H. Finally, pyiB to converts O-methylpyrichalasin J into the final product pyrichalasin H via acetylation of C-21. The protein is Hydrolase pyiE of Pyricularia grisea (Crabgrass-specific blast fungus).